The sequence spans 860 residues: MSRGGSYPHLLWDVRKRSLGLEDPSRLRSRYLGRREFIQRLKLEATLNVHDGCVNTICWNDTGEYILSGSDDTKLVISNPYSRKVLTTIRSGHRANIFSAKFLPCTNDKQIVSCSGDGVIFYTNVEQDAETNRQCQFTCHYGTTYEIMTVPNDPYTFLSCGEDGTVRWFDTRIKTSCTKEDCKDDILINCRRAATSVAICPPIPYYLAVGCSDSSVRIYDRRMLGTRATGNYAGRGTTGMVARFIPSHLNNKSCRVTSLCYSEDGQEILVSYSSDYIYLFDPKDDTARELKTPSAEERREELRQPPVKRLRLRGDWSDTGPRARPESERERDGEQSPNVSLMQRMSDMLSRWFEEASEVAQSNRGRGRSRPRGGTSQSDISTLPTVPSSPDLEVSETAMEVDTPAEQFLQPSTSSTMSAQAHSTSSPTESPHSTPLLSSPDSEQRQSVEASGHHTHHQSDNNNEKLSPKPGTGEPVLSLHYSTEGTTTSTIKLNFTDEWSSIASSSRGIGSHCKSEGQEESFVPQSSVQPPEGDSETKAPEESSEDVTKYQEGVSAENPVENHINITQSDKFTAKPLDSNSGERNDLNLDRSCGVPEESASSEKAKEPETSDQTSTESATNENNTNPEPQFQTEATGPSAHEETSTRDSALQDTDDSDDDPVLIPGARYRAGPGDRRSAVARIQEFFRRRKERKEMEELDTLNIRRPLVKMVYKGHRNSRTMIKEANFWGANFVMSGSDCGHIFIWDRHTAEHLMLLEADNHVVNCLQPHPFDPILASSGIDYDIKIWSPLEESRIFNRKLADEVITRNELMLEETRNTITVPASFMLRMLASLNHIRADRLEGDRSEGSGQENENEDEE.

WD repeat units lie at residues 49 to 88, 92 to 133, 139 to 179, 189 to 229, and 251 to 290; these read VHDG…VLTT, GHRA…ETNR, CHYG…SCTK, NCRR…TRAT, and NKSC…AREL. 2 stretches are compositionally biased toward basic and acidic residues: residues 288–303 and 312–334; these read RELK…EELR and LRGD…RDGE. 4 disordered regions span residues 288 to 340, 355 to 392, 407 to 490, and 502 to 675; these read RELK…PNVS, EASE…SPDL, QFLQ…TTST, and IASS…GPGD. Residue S336 is modified to Phosphoserine. Polar residues-rich tracts occupy residues 379–388 and 409–421; these read DISTLPTVPS and LQPS…SAQA. Positions 422-441 are enriched in low complexity; the sequence is HSTSSPTESPHSTPLLSSPD. A compositionally biased stretch (basic and acidic residues) spans 457–467; it reads HQSDNNNEKLS. Residues 480-490 show a composition bias toward polar residues; sequence HYSTEGTTTST. Positions 502–511 are enriched in low complexity; sequence IASSSRGIGS. Residues 535-549 are compositionally biased toward basic and acidic residues; it reads SETKAPEESSEDVTK. The segment covering 614-626 has biased composition (low complexity); it reads TSTESATNENNTN. The span at 627–636 shows a compositional bias: polar residues; that stretch reads PEPQFQTEAT. The residue at position 649 (S649) is a Phosphoserine. T654 carries the post-translational modification Phosphothreonine. A Phosphoserine modification is found at S657. Positions 676-705 constitute an IQ domain; sequence RRSAVARIQEFFRRRKERKEMEELDTLNIR. WD repeat units lie at residues 718 to 756 and 759 to 798; these read NSRT…HLML and ADNH…RIFN. Phosphoserine is present on residues S847 and S850.

In terms of assembly, interacts with the nuclear receptors NR3C1 and AR in the presence of ligand. Interacts with DDB1, CUL4A and CUL4B. As to expression, highly expressed in skeletal muscle and testis. Expressed to a lesser degree in heart, prostate, and adrenal gland.

The protein localises to the nucleus. It functions in the pathway protein modification; protein ubiquitination. In terms of biological role, ligand-dependent coactivator of nuclear receptors. Enhance transcriptional activity of the nuclear receptors NR3C1 and AR. May function as a substrate receptor for CUL4-DDB1 E3 ubiquitin-protein ligase complex. This chain is DDB1- and CUL4-associated factor 6 (DCAF6), found in Homo sapiens (Human).